Consider the following 459-residue polypeptide: Putrescine aminotransferase (459 aa).

Pyridoxal 5'-phosphate-binding positions include 150 to 151 and glutamine 274; that span reads GT. N6-(pyridoxal phosphate)lysine is present on lysine 300. Pyridoxal 5'-phosphate is bound at residue threonine 332.

It belongs to the class-III pyridoxal-phosphate-dependent aminotransferase family. Putrescine aminotransferase subfamily. The cofactor is pyridoxal 5'-phosphate.

It catalyses the reaction an alkane-alpha,omega-diamine + 2-oxoglutarate = an omega-aminoaldehyde + L-glutamate. The enzyme catalyses putrescine + 2-oxoglutarate = 1-pyrroline + L-glutamate + H2O. It carries out the reaction cadaverine + 2-oxoglutarate = 5-aminopentanal + L-glutamate. Its pathway is amine and polyamine degradation; putrescine degradation; 4-aminobutanal from putrescine (transaminase route): step 1/1. In terms of biological role, catalyzes the aminotransferase reaction from putrescine to 2-oxoglutarate, leading to glutamate and 4-aminobutanal, which spontaneously cyclizes to form 1-pyrroline. This is the first step in one of two pathways for putrescine degradation, where putrescine is converted into 4-aminobutanoate (gamma-aminobutyrate or GABA) via 4-aminobutanal. Also functions as a cadaverine transaminase in a a L-lysine degradation pathway to succinate that proceeds via cadaverine, glutarate and L-2-hydroxyglutarate. This chain is Putrescine aminotransferase, found in Escherichia coli (strain K12 / MC4100 / BW2952).